Consider the following 424-residue polypeptide: Argininosuccinate synthase (424 aa).

Residues 9 to 17 (AYSGGLDTS) and Ala35 each bind ATP. The L-citrulline site is built by Tyr86 and Ser91. 114 to 122 (SHGATGKGN) provides a ligand contact to ATP. The L-aspartate site is built by Thr118, Asn122, and Asp123. Asn122 is an L-citrulline binding site. Positions 126, 179, 188, 269, and 281 each coordinate L-citrulline.

It belongs to the argininosuccinate synthase family. As to quaternary structure, homotetramer.

The enzyme catalyses L-citrulline + L-aspartate + ATP = 2-(N(omega)-L-arginino)succinate + AMP + diphosphate + H(+). Its pathway is amino-acid biosynthesis; L-arginine biosynthesis; L-arginine from L-ornithine and carbamoyl phosphate: step 2/3. It functions in the pathway nitrogen metabolism; urea cycle; (N(omega)-L-arginino)succinate from L-aspartate and L-citrulline: step 1/1. In Anopheles gambiae (African malaria mosquito), this protein is Argininosuccinate synthase.